The sequence spans 817 residues: Two pore calcium channel protein 1 (817 aa).

At 1 to 101 (MSVILDDDVL…PKDARALAAY (101 aa)) the chain is on the cytoplasmic side. The segment at 22 to 66 (PLTPSNGLGQEDLPSKNGGGQSGPNSQVPSLVSGADSPPSSPPGH) is disordered. Residues 102–122 (LFVHNHFFYMMELLTALLLLL) form a helical membrane-spanning segment. The Extracellular portion of the chain corresponds to 123–137 (LSLCESPAVPALKLR). The chain crosses the membrane as a helical span at residues 138–158 (TYVHATLELFALMVVVFELCM). Residues 159 to 172 (KLRWLGFHTFVRHK) lie on the Cytoplasmic side of the membrane. Residues 173–193 (RTMVKTSVLVVQFIEAIVVLV) form a helical membrane-spanning segment. Residues 194-202 (RQTSHVRVT) lie on the Extracellular side of the membrane. The chain crosses the membrane as a helical span at residues 203-221 (RALRCIFLVDCRYCGGVRR). Topologically, residues 222 to 235 (NLRQIFQSLPPFMD) are cytoplasmic. The helical transmembrane segment at 236–256 (ILLLLLFFMIIFAILGFYLFS) threads the bilayer. The Extracellular portion of the chain corresponds to 257–263 (TNPSDPY). Positions 264 to 287 (FNTLENSIVNLFVLLTTANFPDVM) form an intramembrane region, helical; Pore-forming. The Extracellular portion of the chain corresponds to 288–298 (MPSYSRNPWSC). The chain crosses the membrane as a helical span at residues 299-319 (VFFIVYLSIELYFIMNLLLAV). Residues 320–445 (VFDTFNDIEK…NILVNSKAFQ (126 aa)) are Cytoplasmic-facing. Residues 446 to 466 (YFMYLVVAVNGVWILVETFML) traverse the membrane as a helical segment. The Extracellular portion of the chain corresponds to 467-480 (KGGNFISKHVPWSY). Residues 481-501 (LVFLTIYGVELFMKVAGLGPV) form a helical membrane-spanning segment. The Cytoplasmic portion of the chain corresponds to 502 to 504 (EYL). A helical membrane pass occupies residues 505-527 (SSGWNLFDFSVTAFAFLGLLALT). The Extracellular segment spans residues 528-535 (LNMEPFYF). Residues 536 to 550 (IVVLRPLQLLRLFKL) form a helical membrane-spanning segment. Over 551 to 574 (KKRYRNVLDTMFELLPRMASLGLT) the chain is Cytoplasmic. The chain crosses the membrane as a helical span at residues 575–595 (LLTFYYSFAIVGMEFFSGRLS). Topologically, residues 596 to 630 (PNCCNSSTVADAYRFINHTVGNKTKVEEGYYYLNN) are extracellular. The helical; Pore-forming intramembrane region spans 631-654 (FDNILNSFVTLFELTVVNNWYIIM). The Extracellular portion of the chain corresponds to 655–671 (EGVTSQTSHWSRLYFMT). A helical membrane pass occupies residues 672–692 (FYIVTMVVMTIIVAFILEAFV). At 693–817 (FRMNYSRKSQ…GSRQRSQTVT (125 aa)) the chain is on the cytoplasmic side. Residues 770 to 794 (SLKMYQEEIQEWYEEHAREQEQQQL) are a coiled coil. A disordered region spans residues 785–817 (HAREQEQQQLRGSAPSPAAQQTPGSRQRSQTVT). Polar residues predominate over residues 802-817 (AAQQTPGSRQRSQTVT).

This sequence belongs to the calcium channel alpha-1 subunit (TC 1.A.1.11) family. Two pore calcium channel subfamily. Dimer. Interacts with MTOR; the interaction is required for TPCN1 ATP sensitivity. Interacts with STX7, STX8 and STX12. Interacts with JPT2. Found in a complex with LSM12, TPCN1 and TPCN2. N-glycosylated. In terms of tissue distribution, widely expressed. Expressed at relatively high level in kidney, liver and lung, and in the kidney it is expressed at inner medullary collecting ducts.

It is found in the lysosome membrane. Its subcellular location is the endosome membrane. It localises to the early endosome membrane. The protein resides in the recycling endosome membrane. The enzyme catalyses Na(+)(in) = Na(+)(out). The catalysed reaction is Ca(2+)(in) = Ca(2+)(out). Na(+) current is inhibited by ATP in a MTORC-dependent manner. ATP sensitivity is independent of PI(3,5)P2. Probably regulated by Mg(2+) ions, cytosolic Mg(2+) selectively inhibits outward current while lysosomal Mg(2+) modestly inhibits both the outward and inward currents. In the absence of Mg(2+), NAADP readily activates TPCN2, with properties similar to PI(3,5)P2. Both current elicited by PI(3,5)P2 as well as NAADP are inhibited by tetrandrine. Functionally, intracellular channel initially characterized as a non-selective Ca(2+)-permeable channel activated by NAADP (nicotinic acid adenine dinucleotide phosphate), it is also a voltage-gated highly-selective Na(+) channel activated directly by PI(3,5)P2 (phosphatidylinositol 3,5-bisphosphate) that senses pH changes and confers electrical excitability to organelles. Localizes to the early and recycling endosomes membranes where it plays a role in the uptake and processing of proteins and regulates organellar membrane excitability, membrane trafficking and pH homeostasis. Ion selectivity is not fixed but rather agonist-dependent and under defined ionic conditions, can be readily activated by both NAADP and PI(3,5)P2. Required for mTOR-dependent nutrient sensing. The polypeptide is Two pore calcium channel protein 1 (Tpcn1) (Rattus norvegicus (Rat)).